We begin with the raw amino-acid sequence, 234 residues long: 2-C-methyl-D-erythritol 4-phosphate cytidylyltransferase (234 aa).

The protein belongs to the IspD/TarI cytidylyltransferase family. IspD subfamily.

The catalysed reaction is 2-C-methyl-D-erythritol 4-phosphate + CTP + H(+) = 4-CDP-2-C-methyl-D-erythritol + diphosphate. It functions in the pathway isoprenoid biosynthesis; isopentenyl diphosphate biosynthesis via DXP pathway; isopentenyl diphosphate from 1-deoxy-D-xylulose 5-phosphate: step 2/6. Its function is as follows. Catalyzes the formation of 4-diphosphocytidyl-2-C-methyl-D-erythritol from CTP and 2-C-methyl-D-erythritol 4-phosphate (MEP). This chain is 2-C-methyl-D-erythritol 4-phosphate cytidylyltransferase, found in Pseudomonas paraeruginosa (strain DSM 24068 / PA7) (Pseudomonas aeruginosa (strain PA7)).